The following is a 307-amino-acid chain: Phosphoribosylaminoimidazole-succinocarboxamide synthase (307 aa).

The protein belongs to the SAICAR synthetase family.

The enzyme catalyses 5-amino-1-(5-phospho-D-ribosyl)imidazole-4-carboxylate + L-aspartate + ATP = (2S)-2-[5-amino-1-(5-phospho-beta-D-ribosyl)imidazole-4-carboxamido]succinate + ADP + phosphate + 2 H(+). Its pathway is purine metabolism; IMP biosynthesis via de novo pathway; 5-amino-1-(5-phospho-D-ribosyl)imidazole-4-carboxamide from 5-amino-1-(5-phospho-D-ribosyl)imidazole-4-carboxylate: step 1/2. The polypeptide is Phosphoribosylaminoimidazole-succinocarboxamide synthase (Thermobifida fusca (strain YX)).